A 498-amino-acid polypeptide reads, in one-letter code: ATP synthase subunit beta, chloroplastic (498 aa).

ATP is bound at residue 172–179 (GGAGVGKT).

The protein belongs to the ATPase alpha/beta chains family. F-type ATPases have 2 components, CF(1) - the catalytic core - and CF(0) - the membrane proton channel. CF(1) has five subunits: alpha(3), beta(3), gamma(1), delta(1), epsilon(1). CF(0) has four main subunits: a(1), b(1), b'(1) and c(9-12).

Its subcellular location is the plastid. The protein localises to the chloroplast thylakoid membrane. The catalysed reaction is ATP + H2O + 4 H(+)(in) = ADP + phosphate + 5 H(+)(out). Its function is as follows. Produces ATP from ADP in the presence of a proton gradient across the membrane. The catalytic sites are hosted primarily by the beta subunits. The protein is ATP synthase subunit beta, chloroplastic of Asarum canadense (Wild ginger).